The chain runs to 417 residues: UDP-N-acetylglucosamine 1-carboxyvinyltransferase 3 (417 aa).

22-23 (KN) provides a ligand contact to phosphoenolpyruvate. A UDP-N-acetyl-alpha-D-glucosamine-binding site is contributed by R92. C116 functions as the Proton donor in the catalytic mechanism. C116 bears the 2-(S-cysteinyl)pyruvic acid O-phosphothioketal mark. UDP-N-acetyl-alpha-D-glucosamine-binding positions include 121 to 125 (RPIDQ), D304, and I326.

It belongs to the EPSP synthase family. MurA subfamily.

It is found in the cytoplasm. The enzyme catalyses phosphoenolpyruvate + UDP-N-acetyl-alpha-D-glucosamine = UDP-N-acetyl-3-O-(1-carboxyvinyl)-alpha-D-glucosamine + phosphate. It participates in cell wall biogenesis; peptidoglycan biosynthesis. In terms of biological role, cell wall formation. Adds enolpyruvyl to UDP-N-acetylglucosamine. The sequence is that of UDP-N-acetylglucosamine 1-carboxyvinyltransferase 3 from Caldanaerobacter subterraneus subsp. tengcongensis (strain DSM 15242 / JCM 11007 / NBRC 100824 / MB4) (Thermoanaerobacter tengcongensis).